A 295-amino-acid chain; its full sequence is G1/S-specific cyclin-D1 (295 aa).

A Cyclin N-terminal domain is found at 28–152; that stretch reads LRAMLKTEET…LLVNKLKWNL (125 aa). Lys269 participates in a covalent cross-link: Glycyl lysine isopeptide (Lys-Gly) (interchain with G-Cter in ubiquitin). The disordered stretch occupies residues 269 to 295; that stretch reads KATEEEGEVEEEAGLACTPTDVRDVDI. Thr286 bears the Phosphothreonine mark.

This sequence belongs to the cyclin family. Cyclin D subfamily. Interacts with either CDK4 or CDK6 protein kinase to form a serine/threonine kinase holoenzyme complex. The cyclin subunit imparts substrate specificity to the complex. Component of the ternary complex CCND1/CDK4/CDKN1B required for nuclear translocation and modulation of CDK4-mediated kinase activity. Interacts directly with CDKN1B. Can form similar complexes with either CDKN1A or CDKN2A. Interacts with UHRF2; the interaction ubiquitinates CCND1 and appears to occur independently of phosphorylation. Interacts with USP2. Interacts (via cyclin N-terminal domain) with INSM1 (via N-terminal region); the interaction competes with the binding of CCND1 to CDK4 during cell cycle progression and inhibits CDK4 activity. Interacts with CDK4; the interaction is prevented with the binding of CCND1 to INSM1 during cell cycle progression. Post-translationally, phosphorylation at Thr-286 by MAP kinases is required for ubiquitination and degradation by the DCX(AMBRA1) complex. It also plays an essential role for recognition by the FBXO31 component of SCF (SKP1-cullin-F-box) protein ligase complex following DNA damage. Ubiquitinated at Lys-269 by the DCX(AMBRA1) complex during the transition from G1 to S cell phase, leading to its degradation: ubiquitination is dependent on Thr-286 phosphorylation. The DCX(AMBRA1) complex represents the major regulator of CCND1 stability during the G1/S transition. Also ubiquitinated by the SCF(FBXO4) and Cul7-RING(FBXW8) ubiquitin-protein ligase complexes. Following DNA damage it is ubiquitinated by the SCF(FBXO31) protein ligase complex. SCF(FBXO31) ubiquitination is dependent on Thr-286 phosphorylation. Ubiquitinated also by UHRF2 apparently in a phosphorylation-independent manner. Ubiquitination leads to its degradation and G1 arrest. Deubiquitinated by USP2; leading to its stabilization.

Its subcellular location is the nucleus. The protein localises to the cytoplasm. The protein resides in the nucleus membrane. In terms of biological role, regulatory component of the cyclin D1-CDK4 (DC) complex that phosphorylates and inhibits members of the retinoblastoma (RB) protein family including RB1 and regulates the cell-cycle during G(1)/S transition. Phosphorylation of RB1 allows dissociation of the transcription factor E2F from the RB/E2F complex and the subsequent transcription of E2F target genes which are responsible for the progression through the G(1) phase. Hypophosphorylates RB1 in early G(1) phase. Cyclin D-CDK4 complexes are major integrators of various mitogenenic and antimitogenic signals. Also a substrate for SMAD3, phosphorylating SMAD3 in a cell-cycle-dependent manner and repressing its transcriptional activity. Component of the ternary complex, cyclin D1/CDK4/CDKN1B, required for nuclear translocation and activity of the cyclin D-CDK4 complex. Exhibits transcriptional corepressor activity with INSM1 on the NEUROD1 and INS promoters in a cell cycle-independent manner. This chain is G1/S-specific cyclin-D1 (Ccnd1), found in Rattus norvegicus (Rat).